Reading from the N-terminus, the 198-residue chain is Pyridoxal 5'-phosphate synthase subunit PdxT (198 aa).

L-glutamine is bound at residue 52 to 54 (GES). Cysteine 84 acts as the Nucleophile in catalysis. Residues arginine 115 and 143 to 144 (IR) each bind L-glutamine. Active-site charge relay system residues include histidine 179 and glutamate 181.

This sequence belongs to the glutaminase PdxT/SNO family. As to quaternary structure, in the presence of PdxS, forms a dodecamer of heterodimers. Only shows activity in the heterodimer.

It catalyses the reaction aldehydo-D-ribose 5-phosphate + D-glyceraldehyde 3-phosphate + L-glutamine = pyridoxal 5'-phosphate + L-glutamate + phosphate + 3 H2O + H(+). It carries out the reaction L-glutamine + H2O = L-glutamate + NH4(+). Its pathway is cofactor biosynthesis; pyridoxal 5'-phosphate biosynthesis. Catalyzes the hydrolysis of glutamine to glutamate and ammonia as part of the biosynthesis of pyridoxal 5'-phosphate. The resulting ammonia molecule is channeled to the active site of PdxS. The sequence is that of Pyridoxal 5'-phosphate synthase subunit PdxT from Methanococcoides burtonii (strain DSM 6242 / NBRC 107633 / OCM 468 / ACE-M).